Reading from the N-terminus, the 314-residue chain is MPEAVVLINSASDANSIEQTALPVPMALVHRTRVQDAFPVSWIPKGGDRFSVTAVLPHDHPFFAPVHGDRHDPLLIAETLRQAAMLVFHAGYGVPVGYHFLMATLDYTCHLDHLGVSGEVAELEVEVACSQLKFRGGQPVQGQVDWAVRRAGRLAATGTATTRFTSPQVYRRMRGDFATPTASVPGTAPVPAARAGRTRDEDVVLSASSQQDTWRLRVDTSHPTLFQRPNDHVPGMLLLEAARQAACLVTGPAPFVPSIGGTRFVRYAEFDSPCWIQATVRPGPAAGLTTVRVTGHQDGSLVFLTTLSGPAFSG.

Belongs to the AfsA family.

It carries out the reaction a medium-chain 3-oxoacyl-[ACP] + dihydroxyacetone phosphate = a (4-alkanoyl-5-oxo-2,5-dihydrofuran-3-yl)methyl phosphate + holo-[ACP] + H2O. Functionally, involved of the biosynthesis of S.coelicolor butanolide 1 (SCB1), a gamma-butyrolactone that triggers antibiotic production. The protein is 2-oxo-3-(phosphooxy)propyl 3-oxoalkanoate synthase of Streptomyces coelicolor (strain ATCC BAA-471 / A3(2) / M145).